Consider the following 203-residue polypeptide: Small ribosomal subunit protein uS4 (203 aa).

Residues 22–45 (TGKELARRPYKPGQHGPNSRGKVS) form a disordered region. Residues 93–156 (QRLDNVVYRL…QNISTIKEAV (64 aa)) enclose the S4 RNA-binding domain.

The protein belongs to the universal ribosomal protein uS4 family. In terms of assembly, part of the 30S ribosomal subunit. Contacts protein S5. The interaction surface between S4 and S5 is involved in control of translational fidelity.

Functionally, one of the primary rRNA binding proteins, it binds directly to 16S rRNA where it nucleates assembly of the body of the 30S subunit. With S5 and S12 plays an important role in translational accuracy. The protein is Small ribosomal subunit protein uS4 of Enterococcus faecalis (strain ATCC 700802 / V583).